The following is a 312-amino-acid chain: Aquaporin-6 (312 aa).

Over M1 to E50 the chain is Cytoplasmic. A helical transmembrane segment spans residues F51–S71. Residues A72–C89 lie on the Extracellular side of the membrane. A helical membrane pass occupies residues G90–I110. Positions N111–A113 match the NPA 1 motif. At N111–K128 the chain is on the cytoplasmic side. The helical transmembrane segment at V129–V149 threads the bilayer. The Extracellular segment spans residues N150–N183. Residue N183 is glycosylated (N-linked (GlcNAc...) asparagine). A helical membrane pass occupies residues L184 to M204. Topologically, residues N205–P213 are cytoplasmic. The helical transmembrane segment at A214–M234 threads the bilayer. Over E235 to Q267 the chain is Extracellular. The NPA 2 signature appears at N241 to A243. Residues Y268 to Y288 traverse the membrane as a helical segment. Residues D289–A312 lie on the Cytoplasmic side of the membrane.

Belongs to the MIP/aquaporin (TC 1.A.8) family.

It is found in the membrane. The catalysed reaction is H2O(in) = H2O(out). In terms of biological role, water channel required to facilitate the transport of water across membranes. Does not mediate the transport carbon dioxide nor nitric oxide across the membrane. Plays a key role in root water transport of mycorrhizal plant such ectomycorrhizal white spruce or trembling aspen via the hydration at the hyphal-root interphase. Contributes in fungal cellular processes during the basidiocarp formation. The sequence is that of Aquaporin-6 from Laccaria bicolor (Bicoloured deceiver).